A 213-amino-acid polypeptide reads, in one-letter code: GTP cyclohydrolase 1 (213 aa).

The Zn(2+) site is built by cysteine 104, histidine 107, and cysteine 175.

This sequence belongs to the GTP cyclohydrolase I family. In terms of assembly, toroid-shaped homodecamer, composed of two pentamers of five dimers.

The catalysed reaction is GTP + H2O = 7,8-dihydroneopterin 3'-triphosphate + formate + H(+). The protein operates within cofactor biosynthesis; 7,8-dihydroneopterin triphosphate biosynthesis; 7,8-dihydroneopterin triphosphate from GTP: step 1/1. The chain is GTP cyclohydrolase 1 from Brucella abortus (strain 2308).